The following is a 332-amino-acid chain: MFTVSKKSLQASRNAFSPLNNSKRTIVFTAIAAFGDLLIGKDVRLADAMEKGNLHNKNGEYEHKMEQRTQERLNALRNTRPIEPNYEGHVPLWWYERMMLFGISGLKSYFHPENGENIVQLGEATALPCFLESLKRTMLLDKTGRRILQDRPNITSESLDMERLSKMDKNSVGYTYYKWLMKEGVSPDTRAPVTYIDDPVHAFIFKRYRQCHDFYHAINDLPIIIEGEIAVKAFEASNIGVPMAALGALLAPLRLKKVQKERLYSIYLPWAVKAGLNCKPLINVYWEEILDKDIDELRRELNVTPPPDLRKIRKERAKQRKQFKLKYETYEK.

The transit peptide at M1–F16 directs the protein to the mitochondrion. Positions 212, 213, 216, and 228 each coordinate Zn(2+).

It belongs to the COQ4 family. Component of a multi-subunit COQ enzyme complex, composed of at least COQ3, COQ4, COQ5, COQ6, COQ7 and COQ9. Zn(2+) is required as a cofactor.

It is found in the mitochondrion inner membrane. The enzyme catalyses a 4-hydroxy-3-methoxy-5-(all-trans-polyprenyl)benzoate + H(+) = a 2-methoxy-6-(all-trans-polyprenyl)phenol + CO2. The protein operates within cofactor biosynthesis; ubiquinone biosynthesis. Its function is as follows. Lyase that catalyzes the C1-decarboxylation of 4-hydroxy-3-methoxy-5-(all-trans-polyprenyl)benzoic acid into 2-methoxy-6-(all-trans-polyprenyl)phenol during ubiquinone biosynthesis. The sequence is that of Ubiquinone biosynthesis protein COQ4, mitochondrial from Kluyveromyces lactis (strain ATCC 8585 / CBS 2359 / DSM 70799 / NBRC 1267 / NRRL Y-1140 / WM37) (Yeast).